The sequence spans 115 residues: DNA-binding protein Ta0052 (115 aa).

The tract at residues 1–41 is disordered; it reads MDDDEELERIRRQQLESMQRQAMQEQMREEQEKQREAERAR. Residues 15–25 show a composition bias toward low complexity; that stretch reads LESMQRQAMQE. Over residues 26 to 41 the composition is skewed to basic and acidic residues; the sequence is QMREEQEKQREAERAR.

It belongs to the PDCD5 family.

The protein is DNA-binding protein Ta0052 of Thermoplasma acidophilum (strain ATCC 25905 / DSM 1728 / JCM 9062 / NBRC 15155 / AMRC-C165).